Reading from the N-terminus, the 31-residue chain is Fibrinogen beta chain (31 aa).

Over residues His-1–Glu-10 the composition is skewed to acidic residues. Residues His-1–Ala-31 form a disordered region. Tyr-2 is subject to Sulfotyrosine; partial. Position 3 is a sulfotyrosine (Tyr-3). Over residues Ala-18–Ala-31 the composition is skewed to basic and acidic residues.

Heterohexamer; disulfide linked. Contains 2 sets of 3 non-identical chains (alpha, beta and gamma). The 2 heterotrimers are in head to head conformation with the N-termini in a small central domain. Post-translationally, conversion of fibrinogen to fibrin is triggered by thrombin, which cleaves fibrinopeptides A and B from alpha and beta chains, and thus exposes the N-terminal polymerization sites responsible for the formation of the soft clot.

The protein resides in the secreted. Cleaved by the protease thrombin to yield monomers which, together with fibrinogen alpha (FGA) and fibrinogen gamma (FGG), polymerize to form an insoluble fibrin matrix. Fibrin has a major function in hemostasis as one of the primary components of blood clots. In addition, functions during the early stages of wound repair to stabilize the lesion and guide cell migration during re-epithelialization. Was originally thought to be essential for platelet aggregation, based on in vitro studies using anticoagulated blood. However subsequent studies have shown that it is not absolutely required for thrombus formation in vivo. Enhances expression of SELP in activated platelets. Maternal fibrinogen is essential for successful pregnancy. Fibrin deposition is also associated with infection, where it protects against IFNG-mediated hemorrhage. May also facilitate the antibacterial immune response via both innate and T-cell mediated pathways. This chain is Fibrinogen beta chain (FGB), found in Canis lupus familiaris (Dog).